Consider the following 285-residue polypeptide: Bifunctional protein FolD (285 aa).

NADP(+) contacts are provided by residues 164-166 (GAS), isoleucine 189, and isoleucine 230.

The protein belongs to the tetrahydrofolate dehydrogenase/cyclohydrolase family. As to quaternary structure, homodimer.

The catalysed reaction is (6R)-5,10-methylene-5,6,7,8-tetrahydrofolate + NADP(+) = (6R)-5,10-methenyltetrahydrofolate + NADPH. It carries out the reaction (6R)-5,10-methenyltetrahydrofolate + H2O = (6R)-10-formyltetrahydrofolate + H(+). It functions in the pathway one-carbon metabolism; tetrahydrofolate interconversion. In terms of biological role, catalyzes the oxidation of 5,10-methylenetetrahydrofolate to 5,10-methenyltetrahydrofolate and then the hydrolysis of 5,10-methenyltetrahydrofolate to 10-formyltetrahydrofolate. The chain is Bifunctional protein FolD from Sulfurimonas denitrificans (strain ATCC 33889 / DSM 1251) (Thiomicrospira denitrificans (strain ATCC 33889 / DSM 1251)).